The primary structure comprises 466 residues: uncharacterized protein (466 aa).

In terms of domain architecture, Autotransporter spans S178–W466.

This is an uncharacterized protein from Escherichia coli (strain K12).